The chain runs to 94 residues: Cell division topological specificity factor (94 aa).

Belongs to the MinE family.

Prevents the cell division inhibition by proteins MinC and MinD at internal division sites while permitting inhibition at polar sites. This ensures cell division at the proper site by restricting the formation of a division septum at the midpoint of the long axis of the cell. The chain is Cell division topological specificity factor from Acetivibrio thermocellus (strain ATCC 27405 / DSM 1237 / JCM 9322 / NBRC 103400 / NCIMB 10682 / NRRL B-4536 / VPI 7372) (Clostridium thermocellum).